A 284-amino-acid chain; its full sequence is 2-dehydro-3-deoxyphosphooctonate aldolase (284 aa).

The protein belongs to the KdsA family.

The protein resides in the cytoplasm. The catalysed reaction is D-arabinose 5-phosphate + phosphoenolpyruvate + H2O = 3-deoxy-alpha-D-manno-2-octulosonate-8-phosphate + phosphate. It functions in the pathway carbohydrate biosynthesis; 3-deoxy-D-manno-octulosonate biosynthesis; 3-deoxy-D-manno-octulosonate from D-ribulose 5-phosphate: step 2/3. It participates in bacterial outer membrane biogenesis; lipopolysaccharide biosynthesis. The protein is 2-dehydro-3-deoxyphosphooctonate aldolase of Paraburkholderia phymatum (strain DSM 17167 / CIP 108236 / LMG 21445 / STM815) (Burkholderia phymatum).